Consider the following 330-residue polypeptide: Protein C10 (330 aa).

The protein belongs to the poxviridae C4/C10 protein family.

The protein is Protein C10 of Homo sapiens (Human).